The chain runs to 117 residues: Large ribosomal subunit protein bL19 (117 aa).

The protein belongs to the bacterial ribosomal protein bL19 family.

Functionally, this protein is located at the 30S-50S ribosomal subunit interface and may play a role in the structure and function of the aminoacyl-tRNA binding site. This is Large ribosomal subunit protein bL19 from Aliivibrio fischeri (strain ATCC 700601 / ES114) (Vibrio fischeri).